The following is a 347-amino-acid chain: Olfactory receptor 1L6 (347 aa).

Over 1 to 62 (MSYFYRLKLM…GLSSNPQLQK (62 aa)) the chain is Extracellular. An N-linked (GlcNAc...) asparagine glycan is attached at Asn41. The chain crosses the membrane as a helical span at residues 63–86 (PLFAIFLIMYLLAAVGNVLIIPAI). Residues 87 to 94 (YSDPRLHT) lie on the Cytoplasmic side of the membrane. A helical transmembrane segment spans residues 95–116 (PMYFFLSNLSFMDICFTTVIVP). Topologically, residues 117-137 (KMLVNFLSETKVISYVGCLAQ) are extracellular. An intrachain disulfide couples Cys134 to Cys226. A helical membrane pass occupies residues 138–157 (MYFFMAFGNTDSYLLASMAI). Residues 158–176 (DRLVAICNPLHYDVVMKPR) lie on the Cytoplasmic side of the membrane. The chain crosses the membrane as a helical span at residues 177–195 (HCLLMLLGSCSISHLHSLF). The Extracellular segment spans residues 196-233 (RVLLMSRLSFCASHIIKHFFCDTQPVLKLSCSDTSSSQ). The chain crosses the membrane as a helical span at residues 234–256 (MVVMTETLAVIVTPFLCIIFSYL). Topologically, residues 257–273 (RIMVTVLRIPSAAGKWK) are cytoplasmic. Residues 274-296 (AFSTCGSHLTAVALFYGSIIYVY) traverse the membrane as a helical segment. At 297 to 309 (FRPLSMYSVVRDR) the chain is on the extracellular side. The chain crosses the membrane as a helical span at residues 310-329 (VATVMYTVVTPMLNPFIYSL). The Cytoplasmic segment spans residues 330-347 (RNKDMKRGLKKLQDRIYR).

This sequence belongs to the G-protein coupled receptor 1 family.

It is found in the cell membrane. Odorant receptor. In Homo sapiens (Human), this protein is Olfactory receptor 1L6 (OR1L6).